Consider the following 1189-residue polypeptide: Zinc finger CCCH domain-containing protein 6 (1189 aa).

A compositionally biased stretch (basic and acidic residues) spans 1–12 (MTDSEHAGHDRE). Positions 1–105 (MTDSEHAGHD…HKKRTGFYRD (105 aa)) are disordered. Residues 13 to 28 (DGELEDGEIDDAGFEE) show a composition bias toward acidic residues. Residues 27–73 (EEIQEKEAKENEKQKSEKAYRKSRKKHKKEREKKKSKRRKREKHKHN) adopt a coiled-coil conformation. Basic and acidic residues predominate over residues 29–46 (IQEKEAKENEKQKSEKAY). The span at 47–73 (RKSRKKHKKEREKKKSKRRKREKHKHN) shows a compositional bias: basic residues. C3H1-type zinc fingers lie at residues 273–299 (KGKQ…HDAE), 301–328 (EKRK…HNEF), and 329–352 (PCKF…HDDL). Positions 353 to 385 (TKETKKLLDKVLNTDEELINEDERELEELRKRG) form a coiled coil. Disordered regions lie at residues 451 to 530 (FYTS…GPQN), 630 to 659 (PPVV…PVPG), 676 to 755 (YQED…GNQV), 947 to 1026 (LEQF…PYAP), and 1051 to 1189 (PRDH…SPFC). The segment covering 461-478 (QFQGSSPHPQHIYSSGSS) has biased composition (low complexity). Residues 505–525 (AGPPGLPVPQSPPLPPGPPEI) show a composition bias toward pro residues. Over residues 639-659 (HGSGSDGSSTRTGHGPLPVPG) the composition is skewed to low complexity. Polar residues predominate over residues 718 to 741 (KTLQKQTETLRNQQQPSTELSTPT). Positions 961–973 (GDPRLQKNFDPRL) are enriched in basic and acidic residues. Composition is skewed to low complexity over residues 1009-1020 (SGAGTSNSGSGA) and 1056-1069 (SSST…SSGE). Phosphoserine is present on serine 1158. A compositionally biased stretch (basic and acidic residues) spans 1164-1179 (DPGRETDDKSLKEVFK).

The sequence is that of Zinc finger CCCH domain-containing protein 6 (ZC3H6) from Homo sapiens (Human).